We begin with the raw amino-acid sequence, 112 residues long: DNA-binding protein TSIB_0525 (112 aa).

Belongs to the PDCD5 family.

The polypeptide is DNA-binding protein TSIB_0525 (Thermococcus sibiricus (strain DSM 12597 / MM 739)).